A 660-amino-acid chain; its full sequence is Protein FAM161A (660 aa).

Coiled-coil stretches lie at residues glutamate 93–lysine 120 and tyrosine 296–alanine 320. Residues glutamine 341–glutamine 525 form a required for interaction with CFAP418 region. Glycyl lysine isopeptide (Lys-Gly) (interchain with G-Cter in SUMO2) cross-links involve residues lysine 468 and lysine 484. Positions glycine 522–arginine 552 form a coiled coil. Residues lysine 605–histidine 660 form a disordered region. Positions serine 606 to arginine 623 are enriched in basic and acidic residues. The segment covering glutamate 645–histidine 660 has biased composition (acidic residues).

This sequence belongs to the FAM161 family. Interacts (via central region) with CFAP418 (via N-terminus); the interaction is direct. Interacts (via C-terminus) with microtubules. Interacts with LCA5. Interacts with CEP290. Interacts with SDCCAG8. Interacts with FAM161B. Interacts with POC1B. Interacts with CEP78. Forms a microtubule-associated complex with POC5, CETN2 and POC1B. Interacts with CCDC15. Isoform 1 and isoform 3 are widely expressed with highest levels in retina and testis, with isoform 1 being the most abundant in all tissues tested.

It is found in the cytoplasm. Its subcellular location is the cytoskeleton. The protein localises to the cilium basal body. The protein resides in the cell projection. It localises to the cilium. It is found in the microtubule organizing center. Its subcellular location is the centrosome. The protein localises to the centriole. Functionally, involved in ciliogenesis. In Homo sapiens (Human), this protein is Protein FAM161A (FAM161A).